A 116-amino-acid chain; its full sequence is Large ribosomal subunit protein bL19 (116 aa).

It belongs to the bacterial ribosomal protein bL19 family.

This protein is located at the 30S-50S ribosomal subunit interface and may play a role in the structure and function of the aminoacyl-tRNA binding site. The sequence is that of Large ribosomal subunit protein bL19 from Pseudothermotoga lettingae (strain ATCC BAA-301 / DSM 14385 / NBRC 107922 / TMO) (Thermotoga lettingae).